The following is a 747-amino-acid chain: Pentatricopeptide repeat-containing protein At5g39710 (747 aa).

PPR repeat units lie at residues threonine 133–proline 167, glycine 168–proline 203, asparagine 204–proline 238, asparagine 239–proline 273, asparagine 274–leucine 308, aspartate 309–proline 343, serine 344–proline 378, asparagine 379–proline 413, serine 414–proline 448, aspartate 449–proline 483, aspartate 484–proline 518, aspartate 519–proline 553, aspartate 554–proline 588, glutamate 604–proline 638, and aspartate 639–leucine 673.

This sequence belongs to the PPR family. P subfamily.

In Arabidopsis thaliana (Mouse-ear cress), this protein is Pentatricopeptide repeat-containing protein At5g39710 (EMB2745).